We begin with the raw amino-acid sequence, 68 residues long: Large ribosomal subunit protein bL35 (68 aa).

The protein belongs to the bacterial ribosomal protein bL35 family.

This Rickettsia canadensis (strain McKiel) protein is Large ribosomal subunit protein bL35.